Consider the following 425-residue polypeptide: Serine--tRNA ligase (425 aa).

L-serine is bound at residue 233-235; it reads TAE. 264–266 contributes to the ATP binding site; the sequence is RRE. Glu287 provides a ligand contact to L-serine. Position 351 to 354 (351 to 354) interacts with ATP; sequence EISS. L-serine is bound at residue Ser387.

Belongs to the class-II aminoacyl-tRNA synthetase family. Type-1 seryl-tRNA synthetase subfamily. In terms of assembly, homodimer. The tRNA molecule binds across the dimer.

The protein resides in the cytoplasm. It carries out the reaction tRNA(Ser) + L-serine + ATP = L-seryl-tRNA(Ser) + AMP + diphosphate + H(+). It catalyses the reaction tRNA(Sec) + L-serine + ATP = L-seryl-tRNA(Sec) + AMP + diphosphate + H(+). The protein operates within aminoacyl-tRNA biosynthesis; selenocysteinyl-tRNA(Sec) biosynthesis; L-seryl-tRNA(Sec) from L-serine and tRNA(Sec): step 1/1. In terms of biological role, catalyzes the attachment of serine to tRNA(Ser). Is also able to aminoacylate tRNA(Sec) with serine, to form the misacylated tRNA L-seryl-tRNA(Sec), which will be further converted into selenocysteinyl-tRNA(Sec). In Thermotoga maritima (strain ATCC 43589 / DSM 3109 / JCM 10099 / NBRC 100826 / MSB8), this protein is Serine--tRNA ligase.